A 416-amino-acid polypeptide reads, in one-letter code: MRSWTSPALAPLPASGLPLRLHDTRTGRITPVVPLTPGTARLYVCGITPYDSTHLGHAATYHAADLMRRALRDSGLAVEMAQNVTDVDDPLLERADRDGVDWRELAASQSALFAEDMEALRVIAPETYRSVSEAMDEIIAVVLALHARGRAYPVEAADAAGPDWYLDLAADGALGDVSGWSEEQMLAVFAERGGDPDREGKRGRFDPLLWSAEREGEPAWDAGVLGRGRPGWHVECVCIAEEGIGLPFDVQAGGSDLIFPHHDLSAAHSVALGRPFAAAYAHSGMVGYQGEKMSKSLGNLVFVHRLVREGTDPMVIRLVLMAHHYRSDWEWTDGELDRAAERLKSYRLAARRGDHRPATVEALRAALRDDLDTVRALEALDAWAEGGSSSGAETDPAAPGDVPTAMDALFGITLQS.

Zn(2+) is bound at residue C45. Residues 45 to 48 (CGIT), T60, and 83 to 85 (NVT) contribute to the L-cysteinyl-5'-AMP site. The 'HIGH' region motif lies at 47–57 (ITPYDSTHLGH). Positions 191–196 (ERGGDP) match the 'ERGGDP' region motif. W232 provides a ligand contact to L-cysteinyl-5'-AMP. C236 is a Zn(2+) binding site. 254–256 (GSD) is a binding site for L-cysteinyl-5'-AMP. H261 contacts Zn(2+). V286 serves as a coordination point for L-cysteinyl-5'-AMP. Positions 292–296 (KMSKS) match the 'KMSKS' region motif.

Belongs to the class-I aminoacyl-tRNA synthetase family. MshC subfamily. As to quaternary structure, monomer. The cofactor is Zn(2+).

It carries out the reaction 1D-myo-inositol 2-amino-2-deoxy-alpha-D-glucopyranoside + L-cysteine + ATP = 1D-myo-inositol 2-(L-cysteinylamino)-2-deoxy-alpha-D-glucopyranoside + AMP + diphosphate + H(+). In terms of biological role, catalyzes the ATP-dependent condensation of GlcN-Ins and L-cysteine to form L-Cys-GlcN-Ins. This chain is L-cysteine:1D-myo-inositol 2-amino-2-deoxy-alpha-D-glucopyranoside ligase, found in Brachybacterium faecium (strain ATCC 43885 / DSM 4810 / JCM 11609 / LMG 19847 / NBRC 14762 / NCIMB 9860 / 6-10).